Here is a 379-residue protein sequence, read N- to C-terminus: UDP-4-amino-4-deoxy-L-arabinose--oxoglutarate aminotransferase (379 aa).

Position 182 is an N6-(pyridoxal phosphate)lysine (Lys-182).

It belongs to the DegT/DnrJ/EryC1 family. ArnB subfamily. In terms of assembly, homodimer. Pyridoxal 5'-phosphate serves as cofactor.

The enzyme catalyses UDP-4-amino-4-deoxy-beta-L-arabinose + 2-oxoglutarate = UDP-beta-L-threo-pentopyranos-4-ulose + L-glutamate. Its pathway is nucleotide-sugar biosynthesis; UDP-4-deoxy-4-formamido-beta-L-arabinose biosynthesis; UDP-4-deoxy-4-formamido-beta-L-arabinose from UDP-alpha-D-glucuronate: step 2/3. The protein operates within bacterial outer membrane biogenesis; lipopolysaccharide biosynthesis. In terms of biological role, catalyzes the conversion of UDP-4-keto-arabinose (UDP-Ara4O) to UDP-4-amino-4-deoxy-L-arabinose (UDP-L-Ara4N). The modified arabinose is attached to lipid A and is required for resistance to polymyxin and cationic antimicrobial peptides. The protein is UDP-4-amino-4-deoxy-L-arabinose--oxoglutarate aminotransferase of Salmonella agona (strain SL483).